A 932-amino-acid chain; its full sequence is Serotype-specific antigen 1 (932 aa).

Positions 1–24 (MYKIKHSFNKTLIAISISSFLSIA) are cleaved as a signal peptide. The Peptidase S8 domain occupies 25–407 (YATESIENPQ…WGLINLKKAV (383 aa)). Active-site charge relay system residues include Asp58, His116, and Ser351. The region spanning 669–932 (HTPLQTTVWA…PIWLESKCWL (264 aa)) is the Autotransporter domain.

The protein belongs to the peptidase S8 family.

It is found in the cell outer membrane. This is Serotype-specific antigen 1 (ssa1) from Mannheimia haemolytica (Pasteurella haemolytica).